The primary structure comprises 566 residues: Membrane protein insertase YidC (566 aa).

A run of 5 helical transmembrane segments spans residues 3–23 (IKRI…FNAW), 346–366 (GWLW…HAVV), 369–389 (WGWS…WFSA), 436–456 (GGCL…YVII), and 509–529 (MWIL…GLVL).

This sequence belongs to the OXA1/ALB3/YidC family. Type 1 subfamily. In terms of assembly, interacts with the Sec translocase complex via SecD. Specifically interacts with transmembrane segments of nascent integral membrane proteins during membrane integration.

It is found in the cell inner membrane. Required for the insertion and/or proper folding and/or complex formation of integral membrane proteins into the membrane. Involved in integration of membrane proteins that insert both dependently and independently of the Sec translocase complex, as well as at least some lipoproteins. Aids folding of multispanning membrane proteins. The protein is Membrane protein insertase YidC of Coxiella burnetii (strain CbuK_Q154) (Coxiella burnetii (strain Q154)).